We begin with the raw amino-acid sequence, 344 residues long: Rho guanine nucleotide exchange factor 39 (344 aa).

Residues 22 to 197 (KRVCTARELL…SETAQKVHAI (176 aa)) enclose the DH domain. The 105-residue stretch at 227-331 (WFLRQGWLLV…WHHSLTLAIR (105 aa)) folds into the PH domain.

It localises to the cell membrane. In terms of biological role, promotes cell proliferation. This chain is Rho guanine nucleotide exchange factor 39 (Arhgef39), found in Mus musculus (Mouse).